The sequence spans 365 residues: DNA replication and repair protein RecF (365 aa).

30-37 (GDNAQGKT) serves as a coordination point for ATP.

This sequence belongs to the RecF family.

The protein localises to the cytoplasm. Its function is as follows. The RecF protein is involved in DNA metabolism; it is required for DNA replication and normal SOS inducibility. RecF binds preferentially to single-stranded, linear DNA. It also seems to bind ATP. This Alkaliphilus oremlandii (strain OhILAs) (Clostridium oremlandii (strain OhILAs)) protein is DNA replication and repair protein RecF.